The primary structure comprises 307 residues: Protein FAM76A (307 aa).

2 disordered regions span residues 161-181 and 287-307; these read SRLS…SSIQ and KQAA…ITSP. Residues 217–297 adopt a coiled-coil conformation; it reads IIAQLKEEVA…QAAALSKGKK (81 aa).

Belongs to the FAM76 family.

In Gallus gallus (Chicken), this protein is Protein FAM76A (FAM76A).